The primary structure comprises 29 residues: Cytochrome b6-f complex subunit 8 (29 aa).

A helical membrane pass occupies residues 3–23; sequence ILALGWVSVLALFTWSIAMVV.

It belongs to the PetN family. The 4 large subunits of the cytochrome b6-f complex are cytochrome b6, subunit IV (17 kDa polypeptide, PetD), cytochrome f and the Rieske protein, while the 4 small subunits are PetG, PetL, PetM and PetN. The complex functions as a dimer.

The protein resides in the cellular thylakoid membrane. Functionally, component of the cytochrome b6-f complex, which mediates electron transfer between photosystem II (PSII) and photosystem I (PSI), cyclic electron flow around PSI, and state transitions. This is Cytochrome b6-f complex subunit 8 from Gloeothece citriformis (strain PCC 7424) (Cyanothece sp. (strain PCC 7424)).